Consider the following 530-residue polypeptide: ATP-dependent RNA helicase DBP3 (530 aa).

Residues 1 to 20 (MSKDEIKDKKRKSEEYEVVD) are compositionally biased toward basic and acidic residues. Residues 1-77 (MSKDEIKDKK…VASVSTSSTV (77 aa)) form a disordered region. The stretch at 19–58 (VDKKKHKKDKKDKKEKKDKKEKKLKKDKKDKKDKKETKSE) forms a coiled coil. The span at 21-50 (KKKHKKDKKDKKEKKDKKEKKLKKDKKDKK) shows a compositional bias: basic residues. The segment covering 67–77 (SVASVSTSSTV) has biased composition (low complexity). Positions 117–143 (LSFSHISLDSRIQAEISKFPKPTPIQA) match the Q motif motif. Positions 146 to 322 (WPYLLAGKDV…STFMNSPIKV (177 aa)) constitute a Helicase ATP-binding domain. 159–166 (AETGSGKT) lines the ATP pocket. The DEAD box motif lies at 269 to 272 (DEAD). One can recognise a Helicase C-terminal domain in the interval 351–500 (KLLELLKKYQ…PVPEELKKFG (150 aa)).

This sequence belongs to the DEAD box helicase family. DDX5/DBP2 subfamily.

It is found in the nucleus. It localises to the nucleolus. The catalysed reaction is ATP + H2O = ADP + phosphate + H(+). ATP-dependent RNA helicase required for 60S ribosomal subunit synthesis. Involved in efficient pre-rRNA processing, predominantly at site A3, which is necessary for the normal formation of 25S and 5.8S rRNAs. This Vanderwaltozyma polyspora (strain ATCC 22028 / DSM 70294 / BCRC 21397 / CBS 2163 / NBRC 10782 / NRRL Y-8283 / UCD 57-17) (Kluyveromyces polysporus) protein is ATP-dependent RNA helicase DBP3 (DBP3).